The following is a 399-amino-acid chain: uncharacterized protein (399 aa).

Residues 375–399 form a disordered region; the sequence is AAGGHRGSHGKSEQAATVRVVDDRR.

The protein belongs to the mycobacterial PPE family.

This is an uncharacterized protein from Mycobacterium tuberculosis (strain CDC 1551 / Oshkosh).